The primary structure comprises 213 residues: General transcription factor 3C polypeptide 6 (213 aa).

Residues 1–11 (MAAAADERSPE) show a composition bias toward basic and acidic residues. Disordered regions lie at residues 1-20 (MAAAADERSPEDGEDEEEEE) and 191-213 (SGPLIDIPSETEGSVFMETQMLP). The residue at position 2 (Ala2) is an N-acetylalanine. Ser9 is modified (phosphoserine).

Belongs to the TFIIIC subunit 6 family. In terms of assembly, part of the TFIIIC subcomplex TFIIIC2, consisting of six subunits, GTF3C1, GTF3C2, GTF3C3, GTF3C4, GTF3C5 and GTF3C6. Interacts with GTF3C4 and GTF3C5.

It is found in the nucleus. Functionally, involved in RNA polymerase III-mediated transcription. Integral, tightly associated component of the DNA-binding TFIIIC2 subcomplex that directly binds tRNA and virus-associated RNA promoters. The chain is General transcription factor 3C polypeptide 6 (GTF3C6) from Homo sapiens (Human).